Reading from the N-terminus, the 357-residue chain is Phosphoserine aminotransferase (357 aa).

Residue Arg-41 coordinates L-glutamate. Pyridoxal 5'-phosphate contacts are provided by residues 75–76 (GT), Trp-100, Thr-150, Asp-170, and Gln-193. Lys-194 carries the N6-(pyridoxal phosphate)lysine modification. Residue 234 to 235 (NT) participates in pyridoxal 5'-phosphate binding.

This sequence belongs to the class-V pyridoxal-phosphate-dependent aminotransferase family. SerC subfamily. Homodimer. Pyridoxal 5'-phosphate is required as a cofactor.

The protein localises to the cytoplasm. The catalysed reaction is O-phospho-L-serine + 2-oxoglutarate = 3-phosphooxypyruvate + L-glutamate. It carries out the reaction 4-(phosphooxy)-L-threonine + 2-oxoglutarate = (R)-3-hydroxy-2-oxo-4-phosphooxybutanoate + L-glutamate. Its pathway is amino-acid biosynthesis; L-serine biosynthesis; L-serine from 3-phospho-D-glycerate: step 2/3. Functionally, catalyzes the reversible conversion of 3-phosphohydroxypyruvate to phosphoserine and of 3-hydroxy-2-oxo-4-phosphonooxybutanoate to phosphohydroxythreonine. In Lactiplantibacillus plantarum (strain ATCC BAA-793 / NCIMB 8826 / WCFS1) (Lactobacillus plantarum), this protein is Phosphoserine aminotransferase.